A 370-amino-acid polypeptide reads, in one-letter code: Anhydro-N-acetylmuramic acid kinase (370 aa).

12 to 19 lines the ATP pocket; that stretch reads GTSLDGVD.

Belongs to the anhydro-N-acetylmuramic acid kinase family.

The catalysed reaction is 1,6-anhydro-N-acetyl-beta-muramate + ATP + H2O = N-acetyl-D-muramate 6-phosphate + ADP + H(+). It participates in amino-sugar metabolism; 1,6-anhydro-N-acetylmuramate degradation. The protein operates within cell wall biogenesis; peptidoglycan recycling. In terms of biological role, catalyzes the specific phosphorylation of 1,6-anhydro-N-acetylmuramic acid (anhMurNAc) with the simultaneous cleavage of the 1,6-anhydro ring, generating MurNAc-6-P. Is required for the utilization of anhMurNAc either imported from the medium or derived from its own cell wall murein, and thus plays a role in cell wall recycling. This Pectobacterium carotovorum subsp. carotovorum (strain PC1) protein is Anhydro-N-acetylmuramic acid kinase.